The primary structure comprises 503 residues: U6 snRNA (guanine-N(2))-methyltransferase THUMPD2 (503 aa).

The region spanning 161-266 (CQLEKQIKEE…DIYSVVGIPV (106 aa)) is the THUMP domain.

The protein belongs to the methyltransferase superfamily. As to quaternary structure, part of the heterodimeric THUMPD2-TRM112 methyltransferase complex; this complex forms an active tRNA methyltransferase, where TRMT112 acts as an activator of the catalytic subunit THUMPD2. In terms of tissue distribution, expressed in a variety of tissues including brain, colon, gingiva, heart, kidney, liver, lung, placenta, small intestine, spleen and thymus.

It is found in the nucleus. It catalyses the reaction guanosine in U6 snRNA + S-adenosyl-L-methionine = N(2)-methylguanosine in U6 snRNA + S-adenosyl-L-homocysteine + H(+). Its function is as follows. Catalytic subunit of the THUMPD2-TRM112 methyltransferase complex, that specifically mediates the S-adenosyl-L-methionine-dependent N(2)-methylation of guanosine nucleotides, most probably at position 72 (m2G72), in the U6snRNA of the major spliceosome. This modification in the U6 snRNA affects the constitutive splicing efficiency of introns that have suboptimal splice sites and can impact final mRNA levels. This is U6 snRNA (guanine-N(2))-methyltransferase THUMPD2 from Homo sapiens (Human).